The chain runs to 469 residues: Glutamine synthetase (469 aa).

Residues 14 to 98 form the GS beta-grasp domain; sequence NDVKYVDLRF…ITCDVLEPTT (85 aa). The 364-residue stretch at 106 to 469 folds into the GS catalytic domain; the sequence is PRGIAKKAEA…PVEFDMYYSG (364 aa). Residues Glu-131 and Glu-133 each coordinate Mg(2+). Glu-209 contacts ATP. Residues Glu-214 and Glu-221 each coordinate Mg(2+). Residues 265 to 266 and Gly-266 each bind L-glutamate; that span reads NG. A Mg(2+)-binding site is contributed by His-270. Residues 272 to 274 and Ser-274 contribute to the ATP site; that span reads HQS. Residues Arg-322, Glu-328, and Arg-340 each contribute to the L-glutamate site. ATP is bound by residues Arg-340, Arg-345, and Lys-353. Glu-358 is a binding site for Mg(2+). L-glutamate is bound at residue Arg-360. Tyr-398 bears the O-AMP-tyrosine mark.

This sequence belongs to the glutamine synthetase family. In terms of assembly, oligomer of 12 subunits arranged in the form of two hexameric ring. Mg(2+) is required as a cofactor.

It is found in the cytoplasm. It carries out the reaction L-glutamate + NH4(+) + ATP = L-glutamine + ADP + phosphate + H(+). With respect to regulation, the activity of this enzyme could be controlled by adenylation under conditions of abundant glutamine. In terms of biological role, catalyzes the ATP-dependent biosynthesis of glutamine from glutamate and ammonia. The chain is Glutamine synthetase from Bradyrhizobium diazoefficiens (strain JCM 10833 / BCRC 13528 / IAM 13628 / NBRC 14792 / USDA 110).